Here is a 595-residue protein sequence, read N- to C-terminus: Adenine deaminase 2 (595 aa).

Belongs to the metallo-dependent hydrolases superfamily. Adenine deaminase family. It depends on Mn(2+) as a cofactor.

The enzyme catalyses adenine + H2O + H(+) = hypoxanthine + NH4(+). The chain is Adenine deaminase 2 from Rhizobium johnstonii (strain DSM 114642 / LMG 32736 / 3841) (Rhizobium leguminosarum bv. viciae).